Reading from the N-terminus, the 93-residue chain is Small ribosomal subunit protein uS19 (93 aa).

The protein belongs to the universal ribosomal protein uS19 family.

Protein S19 forms a complex with S13 that binds strongly to the 16S ribosomal RNA. In Nitratidesulfovibrio vulgaris (strain DSM 19637 / Miyazaki F) (Desulfovibrio vulgaris), this protein is Small ribosomal subunit protein uS19.